A 251-amino-acid chain; its full sequence is Hydroxyacylglutathione hydrolase (251 aa).

H59, H61, D63, H64, H118, D141, and H179 together coordinate Zn(2+).

Belongs to the metallo-beta-lactamase superfamily. Glyoxalase II family. As to quaternary structure, monomer. Requires Zn(2+) as cofactor.

It catalyses the reaction an S-(2-hydroxyacyl)glutathione + H2O = a 2-hydroxy carboxylate + glutathione + H(+). Its pathway is secondary metabolite metabolism; methylglyoxal degradation; (R)-lactate from methylglyoxal: step 2/2. Functionally, thiolesterase that catalyzes the hydrolysis of S-D-lactoyl-glutathione to form glutathione and D-lactic acid. This Prochlorococcus marinus (strain NATL2A) protein is Hydroxyacylglutathione hydrolase.